Reading from the N-terminus, the 132-residue chain is Fatty acid-binding protein, adipocyte (132 aa).

An N-acetylcysteine modification is found at Cys2. The residue at position 13 (Ser13) is a Phosphoserine. Tyr20 bears the Phosphotyrosine; by Tyr-kinases mark. The Nuclear localization signal motif lies at 22 to 32 (KEVGVGFATRK). Residue 127–129 (RVY) coordinates a fatty acid.

This sequence belongs to the calycin superfamily. Fatty-acid binding protein (FABP) family. As to quaternary structure, monomer. Homodimer. Interacts with PPARG.

Its subcellular location is the cytoplasm. It localises to the nucleus. In terms of biological role, lipid transport protein in adipocytes. Binds both long chain fatty acids and retinoic acid. Delivers long-chain fatty acids and retinoic acid to their cognate receptors in the nucleus. This is Fatty acid-binding protein, adipocyte (Fabp4) from Rattus norvegicus (Rat).